Consider the following 422-residue polypeptide: Serine--tRNA ligase (422 aa).

231-233 provides a ligand contact to L-serine; the sequence is TGE. 262-264 serves as a coordination point for ATP; sequence RQE. E285 contacts L-serine. Position 349-352 (349-352) interacts with ATP; it reads EISS. S384 contributes to the L-serine binding site.

Belongs to the class-II aminoacyl-tRNA synthetase family. Type-1 seryl-tRNA synthetase subfamily. Homodimer. The tRNA molecule binds across the dimer.

The protein resides in the cytoplasm. The enzyme catalyses tRNA(Ser) + L-serine + ATP = L-seryl-tRNA(Ser) + AMP + diphosphate + H(+). It catalyses the reaction tRNA(Sec) + L-serine + ATP = L-seryl-tRNA(Sec) + AMP + diphosphate + H(+). Its pathway is aminoacyl-tRNA biosynthesis; selenocysteinyl-tRNA(Sec) biosynthesis; L-seryl-tRNA(Sec) from L-serine and tRNA(Sec): step 1/1. Functionally, catalyzes the attachment of serine to tRNA(Ser). Is also able to aminoacylate tRNA(Sec) with serine, to form the misacylated tRNA L-seryl-tRNA(Sec), which will be further converted into selenocysteinyl-tRNA(Sec). This Mesoplasma florum (strain ATCC 33453 / NBRC 100688 / NCTC 11704 / L1) (Acholeplasma florum) protein is Serine--tRNA ligase.